An 845-amino-acid polypeptide reads, in one-letter code: Poly(A) RNA polymerase gld-4 (845 aa).

The interval 1-55 is disordered; that stretch reads MNEDSRLSSSQQPSTSTPRSSIPSTMNSDEPNTCRRLSQSQEQPSTSRTCKSETP. Residues 7-25 are compositionally biased toward low complexity; the sequence is LSSSQQPSTSTPRSSIPST. Residues 26–49 show a composition bias toward polar residues; sequence MNSDEPNTCRRLSQSQEQPSTSRT. Asp139 and Asp141 together coordinate Mg(2+). Residues 276–335 enclose the PAP-associated domain; the sequence is NLGHLLLRFLELYSLEFNFEEMGISPGQCCYIPKSASGARYGHKQAQPGNLALEDPLLTA. The span at 482–506 shows a compositional bias: basic and acidic residues; sequence KSLEKMPACDDNKKEEELVATRETD. Disordered regions lie at residues 482–733 and 788–845; these read KSLE…SEEP and NALT…RLQR. The segment covering 535–551 has biased composition (low complexity); sequence TSTQSVNTSATVSTAAS. Polar residues-rich tracts occupy residues 561-571 and 579-588; these read PGLSSSMGNQS and GINNRNNSAV. Basic and acidic residues predominate over residues 605–620; the sequence is RESKRTQTTSEDKMQD. A compositionally biased stretch (basic residues) spans 643 to 653; that stretch reads SHKHRNAHPQR. Polar residues-rich tracts occupy residues 654-666, 695-732, 788-805, and 819-828; these read QRPS…QGSD, RQQT…SSEE, NALT…TSMQ, and DNNSATSSTD.

In terms of assembly, interacts with gls-1 isoform C. Mg(2+) serves as cofactor. The cofactor is Mn(2+). In terms of tissue distribution, germline-specific.

The protein localises to the cytoplasm. It localises to the cytoplasmic granule. It is found in the perinuclear region. It catalyses the reaction RNA(n) + ATP = RNA(n)-3'-adenine ribonucleotide + diphosphate. Functionally, cytoplasmic poly(A) RNA polymerase that adds successive AMP monomers to the 3'-end of specific RNAs, forming a poly(A) tail. The enzymatic activity is enhanced by its interaction with gls-1. Required, together with gld-2, for early meiotic progression in male and female germ cells and for gld-1 protein accumulation in the hermaphrodite germline. In the germline, forms a complex with gls-1 which directly binds to gld-1 mRNA and prevents its degradation. This chain is Poly(A) RNA polymerase gld-4, found in Caenorhabditis elegans.